The following is a 1013-amino-acid chain: GPI ethanolamine phosphate transferase 3 (1013 aa).

Residues 41-61 form a helical membrane-spanning segment; it reads TLYIFLYSALAALQFIAIAFF. N-linked (GlcNAc...) asparagine glycosylation is found at N184, N205, N336, N399, and N423. 3 helical membrane passes run 447–467, 484–504, and 515–535; these read YYSIGTGIILLIISLAMLITI, VPTIIVMPLVSNVCFLGVFYV, and LWASLLATAVGIIIGFYVPIF. N539 carries N-linked (GlcNAc...) asparagine glycosylation. A run of 4 helical transmembrane segments spans residues 558–578, 582–602, 643–663, and 682–702; these read VAAFLITLHALIFTSNSFTIW, IVSFSLTTLGMLTLYEFVFLP, IVGGYHSIVLIVCTRLASLIT, and NYSFSVMLGCLFLVFATPACI. A glycan (N-linked (GlcNAc...) asparagine) is linked at N707. Residues 715 to 735 traverse the membrane as a helical segment; sequence AAPIWIGMLMKSILFVNFIYW. 3 N-linked (GlcNAc...) asparagine glycosylation sites follow: N742, N750, and N755. 7 helical membrane passes run 761–781, 802–822, 825–845, 868–888, 899–919, 943–963, and 977–997; these read IVVGVSLVAANIGWMMGPLCI, NAYGAQYFLLVINFFMCILLF, PLAQLSLFLMCNQLLSILEIF, FFSTGHQATIPAVQWDMGFIL, LGIVLNTFGPHILCGISVALL, GMLLIYQTVLCLSTFIWVTNF, and FMFAALSLIVTQLVLTFITIA.

Belongs to the PIGG/PIGN/PIGO family. PIGO subfamily.

Its subcellular location is the endoplasmic reticulum membrane. The protein operates within glycolipid biosynthesis; glycosylphosphatidylinositol-anchor biosynthesis. In terms of biological role, involved in glycosylphosphatidylinositol-anchor biosynthesis. Transfers ethanolamine phosphate to the GPI third mannose which links the GPI-anchor to the C-terminus of the proteins by an amide bond. Involved in cell wall biosynthesis. The protein is GPI ethanolamine phosphate transferase 3 (GPI13) of Eremothecium gossypii (strain ATCC 10895 / CBS 109.51 / FGSC 9923 / NRRL Y-1056) (Yeast).